The sequence spans 778 residues: Ubiquitin thioesterase trabid (778 aa).

2 RanBP2-type zinc fingers span residues K5 to L36 and D89 to G118. The span at A187–R197 shows a compositional bias: polar residues. The segment at A187 to Q226 is disordered. Over residues Q198 to Q226 the composition is skewed to low complexity. The RanBP2-type 3 zinc finger occupies Y232–R261. A disordered region spans residues G265–N290. The segment covering S273–Q288 has biased composition (low complexity). The region spanning M507–M665 is the OTU domain. The Nucleophile role is filled by C518. H658 (proton acceptor) is an active-site residue. A phosphoserine mark is found at S770, S771, and S775.

The protein belongs to the peptidase C64 family. Interacts with Apc.

The catalysed reaction is Thiol-dependent hydrolysis of ester, thioester, amide, peptide and isopeptide bonds formed by the C-terminal Gly of ubiquitin (a 76-residue protein attached to proteins as an intracellular targeting signal).. Functionally, positive regulator of the Wnt signaling pathway. Specifically cleaves 'Lys-63'-linked ubiquitin chains. May act by deubiquitinating APC protein, a negative regulator of Wnt-mediated transcription. Required for an efficient wg response, but not for other signaling responses, in the eye. The polypeptide is Ubiquitin thioesterase trabid (trbd) (Drosophila melanogaster (Fruit fly)).